The primary structure comprises 226 residues: MTAKLERLQRALGYTFKEPALLTLALTHRSFGGRNNERLEFLGDSVLNFIIADYLFGRFEEAREGQLSRLRARMVKGVTLAEIAREFDLGEYLRLGSGEMKSGGFRRESILADALESIIGAIYLDAGFEVCADRVLNWFEARLQKLNLKDTQKDSKTRLQEYLQARQLNLPRYEVISVQGEAHAQTFHVRCEIDGLSDATEGTGSSRRVAEQKAAKQALLALGVDQ.

The 123-residue stretch at 5 to 127 folds into the RNase III domain; that stretch reads LERLQRALGY…IIGAIYLDAG (123 aa). E40 contacts Mg(2+). D44 is an active-site residue. Residues D113 and E116 each coordinate Mg(2+). Residue E116 is part of the active site. Residues 154–224 enclose the DRBM domain; it reads DSKTRLQEYL…AKQALLALGV (71 aa).

Belongs to the ribonuclease III family. As to quaternary structure, homodimer. Mg(2+) is required as a cofactor.

Its subcellular location is the cytoplasm. The catalysed reaction is Endonucleolytic cleavage to 5'-phosphomonoester.. Digests double-stranded RNA. Involved in the processing of primary rRNA transcript to yield the immediate precursors to the large and small rRNAs (23S and 16S). Processes some mRNAs, and tRNAs when they are encoded in the rRNA operon. Processes pre-crRNA and tracrRNA of type II CRISPR loci if present in the organism. The sequence is that of Ribonuclease 3 from Hahella chejuensis (strain KCTC 2396).